The following is a 122-amino-acid chain: Small ribosomal subunit protein uS13 (122 aa).

Residues 94–122 (RGLPVRGQRTKTNARQRKGPRPAIGGRKK) are disordered.

The protein belongs to the universal ribosomal protein uS13 family. Part of the 30S ribosomal subunit. Forms a loose heterodimer with protein S19. Forms two bridges to the 50S subunit in the 70S ribosome.

In terms of biological role, located at the top of the head of the 30S subunit, it contacts several helices of the 16S rRNA. In the 70S ribosome it contacts the 23S rRNA (bridge B1a) and protein L5 of the 50S subunit (bridge B1b), connecting the 2 subunits; these bridges are implicated in subunit movement. Contacts the tRNAs in the A and P-sites. The sequence is that of Small ribosomal subunit protein uS13 from Rubrobacter xylanophilus (strain DSM 9941 / JCM 11954 / NBRC 16129 / PRD-1).